A 177-amino-acid chain; its full sequence is TRAF-interacting protein with FHA domain-containing protein A (177 aa).

Residues 48–104 (VAFGRDYNVCRYPLLSNRVSRIQFNLQFFKHFNCSTTAIEIKNLSKKNKLYVDNLEL) form the FHA domain.

It belongs to the TIFA family. As to quaternary structure, interacts with traf6.

The protein resides in the cytoplasm. In terms of biological role, adapter molecule that plays a key role in the activation of pro-inflammatory NF-kappa-B signaling following detection of bacterial pathogen-associated molecular pattern metabolites (PAMPs). Promotes activation of an innate immune response by inducing the oligomerization and polyubiquitination of TRAF6, which leads to the activation of TAK1 and IKK through a proteasome-independent mechanism. In Xenopus tropicalis (Western clawed frog), this protein is TRAF-interacting protein with FHA domain-containing protein A.